We begin with the raw amino-acid sequence, 370 residues long: Pyruvate dehydrogenase E1 component subunit alpha (370 aa).

Heterodimer of an alpha and a beta chain. The cofactor is thiamine diphosphate.

It carries out the reaction N(6)-[(R)-lipoyl]-L-lysyl-[protein] + pyruvate + H(+) = N(6)-[(R)-S(8)-acetyldihydrolipoyl]-L-lysyl-[protein] + CO2. Functionally, the pyruvate dehydrogenase complex catalyzes the overall conversion of pyruvate to acetyl-CoA and CO(2). It contains multiple copies of three enzymatic components: pyruvate dehydrogenase (E1), dihydrolipoamide acetyltransferase (E2) and lipoamide dehydrogenase (E3). The sequence is that of Pyruvate dehydrogenase E1 component subunit alpha (pdhA) from Staphylococcus aureus (strain COL).